Reading from the N-terminus, the 378-residue chain is 3-dehydroquinate synthase (378 aa).

NAD(+) contacts are provided by residues 115–119, 139–140, Lys-152, and Lys-161; these read GVVGD and TS. Zn(2+) is bound by residues Glu-194, His-256, and His-275.

The protein belongs to the sugar phosphate cyclases superfamily. Dehydroquinate synthase family. It depends on Co(2+) as a cofactor. Zn(2+) is required as a cofactor. Requires NAD(+) as cofactor.

It localises to the cytoplasm. The enzyme catalyses 7-phospho-2-dehydro-3-deoxy-D-arabino-heptonate = 3-dehydroquinate + phosphate. It functions in the pathway metabolic intermediate biosynthesis; chorismate biosynthesis; chorismate from D-erythrose 4-phosphate and phosphoenolpyruvate: step 2/7. Its function is as follows. Catalyzes the conversion of 3-deoxy-D-arabino-heptulosonate 7-phosphate (DAHP) to dehydroquinate (DHQ). In Brucella canis (strain ATCC 23365 / NCTC 10854 / RM-666), this protein is 3-dehydroquinate synthase.